The sequence spans 244 residues: ATP synthase subunit 4, mitochondrial (244 aa).

A mitochondrion-targeting transit peptide spans 1 to 36 (MSSKLFCLRSFPSVQRTAWQRLVLPSTRKFSLTPTT).

This sequence belongs to the eukaryotic ATPase B chain family. As to quaternary structure, F-type ATPases have 2 components, CF(1) - the catalytic core - and CF(0) - the membrane proton channel. In yeast, the dimeric form of ATP synthase consists of 17 polypeptides: alpha, beta, gamma, delta, epsilon, 4 (B), 5 (OSCP), 6 (A), 8, 9 (C), d, E (Tim11), f, g, h, i/j and k.

The protein localises to the mitochondrion. Its subcellular location is the mitochondrion inner membrane. Functionally, mitochondrial membrane ATP synthase (F(1)F(0) ATP synthase or Complex V) produces ATP from ADP in the presence of a proton gradient across the membrane which is generated by electron transport complexes of the respiratory chain. F-type ATPases consist of two structural domains, F(1) - containing the extramembraneous catalytic core, and F(0) - containing the membrane proton channel, linked together by a central stalk and a peripheral stalk. During catalysis, ATP synthesis in the catalytic domain of F(1) is coupled via a rotary mechanism of the central stalk subunits to proton translocation. Part of the complex F(0) domain and the peripheric stalk, which acts as a stator to hold the catalytic alpha(3)beta(3) subcomplex and subunit a/ATP6 static relative to the rotary elements. The chain is ATP synthase subunit 4, mitochondrial (atp4) from Schizosaccharomyces pombe (strain 972 / ATCC 24843) (Fission yeast).